The chain runs to 290 residues: Nucleotide-binding protein XF_1405 (290 aa).

13 to 20 (GLSGSGKS) contacts ATP. Residue 65–68 (DIRS) coordinates GTP.

It belongs to the RapZ-like family.

Displays ATPase and GTPase activities. This is Nucleotide-binding protein XF_1405 from Xylella fastidiosa (strain 9a5c).